The sequence spans 366 residues: Zinc finger protein ubi-d4 B (366 aa).

Disordered stretches follow at residues 41 to 94 and 140 to 167; these read ASAP…DGSS and DDLDDEDYEEDTPKRRKGKSKGKGIGGA. Positions 76–86 are enriched in basic and acidic residues; sequence PDPEQMLKKEG. Residues 140–149 are compositionally biased toward acidic residues; sequence DDLDDEDYEE. The segment at 183–206 adopts a C2H2-type zinc-finger fold; that stretch reads YACDICGKRYKNRPGLSYHYAHSH. The tract at residues 211–243 is disordered; it reads EGAGAEDKEDSQPPTPIMHRSEEQKSKKGPDGL. Residues 229–240 show a composition bias toward basic and acidic residues; that stretch reads HRSEEQKSKKGP. 2 consecutive PHD-type zinc fingers follow at residues 247-307 and 304-354; these read NNYC…CKCC and CKCC…CLDL.

Belongs to the requiem/DPF family.

It is found in the cytoplasm. It localises to the nucleus. Its function is as follows. May be a transcription factor required for the apoptosis response following survival factor withdrawal from myeloid cells. Might also have a role in the development and maturation of lymphoid cells. The protein is Zinc finger protein ubi-d4 B (req-b) of Xenopus laevis (African clawed frog).